A 444-amino-acid chain; its full sequence is Ras-related protein RabX (444 aa).

29 to 36 (GGDVCSKN) contributes to the GTP binding site. The Effector region motif lies at 51–58 (LIQVFDDY). 73-77 (EFSSI) contacts GTP. The segment at 91–136 (ENNKNKNNNNNYNYNNNNYNNNNNNNNNNNNNNNNNNNNNNNNNNS) is disordered. Residues 95-135 (NKNNNNNYNYNNNNYNNNNNNNNNNNNNNNNNNNNNNNNNN) are compositionally biased toward low complexity. 207–210 (NDSN) provides a ligand contact to GTP. Disordered stretches follow at residues 213-232 (TPNFSDSSSSSSSSSSSNII) and 298-401 (LQGD…NNDL). Low complexity-rich tracts occupy residues 217–232 (SDSSSSSSSSSSSNII) and 303–399 (NNNN…TYNN). Cys-439 is lipidated: S-palmitoyl cysteine. Cys-441 is modified (cysteine methyl ester). Residue Cys-441 is the site of S-geranylgeranyl cysteine attachment. The propeptide at 442-444 (NLM) is removed in mature form.

Belongs to the small GTPase superfamily. Rab family.

The protein resides in the cell membrane. This chain is Ras-related protein RabX (rabX), found in Dictyostelium discoideum (Social amoeba).